A 160-amino-acid chain; its full sequence is MLVLLAATFFIYISRLTSTDALQLIQRGLRGKSETFDANATIVPEISESKRVIFGPKPTDLQHEEALVASYADPFKAALSIFKLLGANKFHQMTSSKTQLRYAFVKLRRWSQRPIAEPKRSWWQWRSKTGNKSRDDLAQKRGFRSWWSGRHKAKNAKRVA.

Residues 1 to 21 (MLVLLAATFFIYISRLTSTDA) form the signal peptide. The RxLR signature appears at 27 to 30 (RGLR). Residues Asn39 and Asn131 are each glycosylated (N-linked (GlcNAc...) asparagine).

The protein belongs to the RxLR effector family.

The protein resides in the secreted. It localises to the host nucleus. The protein localises to the host cytoplasm. Secreted effector that completely suppresses the host cell death induced by cell death-inducing proteins. This chain is Secreted RxLR effector protein 83, found in Plasmopara viticola (Downy mildew of grapevine).